The following is a 425-amino-acid chain: Imidazolonepropionase (425 aa).

Positions 78 and 80 each coordinate Fe(3+). His-78 and His-80 together coordinate Zn(2+). Residues Arg-87, Tyr-150, and His-183 each coordinate 4-imidazolone-5-propanoate. Tyr-150 provides a ligand contact to N-formimidoyl-L-glutamate. Residue His-248 coordinates Fe(3+). A Zn(2+)-binding site is contributed by His-248. Gln-251 provides a ligand contact to 4-imidazolone-5-propanoate. Position 323 (Asp-323) interacts with Fe(3+). Residue Asp-323 participates in Zn(2+) binding. N-formimidoyl-L-glutamate is bound by residues Asn-325 and Gly-327. Thr-328 provides a ligand contact to 4-imidazolone-5-propanoate.

The protein belongs to the metallo-dependent hydrolases superfamily. HutI family. Requires Zn(2+) as cofactor. Fe(3+) is required as a cofactor.

The protein localises to the cytoplasm. The enzyme catalyses 4-imidazolone-5-propanoate + H2O = N-formimidoyl-L-glutamate. It functions in the pathway amino-acid degradation; L-histidine degradation into L-glutamate; N-formimidoyl-L-glutamate from L-histidine: step 3/3. Functionally, catalyzes the hydrolytic cleavage of the carbon-nitrogen bond in imidazolone-5-propanoate to yield N-formimidoyl-L-glutamate. It is the third step in the universal histidine degradation pathway. The protein is Imidazolonepropionase of Polaromonas sp. (strain JS666 / ATCC BAA-500).